The sequence spans 81 residues: Short neurotoxin 1 (81 aa).

An N-terminal signal peptide occupies residues 1–21 (MKTLLLTLVVVTIVFLDLGYT). 4 disulfides stabilise this stretch: Cys24–Cys43, Cys38–Cys60, Cys62–Cys73, and Cys74–Cys79.

The protein belongs to the three-finger toxin family. Short-chain subfamily. Type I alpha-neurotoxin sub-subfamily. Expressed by the venom gland.

It localises to the secreted. Functionally, binds to muscle nicotinic acetylcholine receptor (nAChR) and inhibit acetylcholine from binding to the receptor, thereby impairing neuromuscular transmission. The protein is Short neurotoxin 1 of Notechis scutatus scutatus (Mainland tiger snake).